The primary structure comprises 429 residues: Argininosuccinate lyase (429 aa).

This sequence belongs to the lyase 1 family. Argininosuccinate lyase subfamily.

The protein resides in the cytoplasm. It carries out the reaction 2-(N(omega)-L-arginino)succinate = fumarate + L-arginine. It functions in the pathway amino-acid biosynthesis; L-arginine biosynthesis; L-arginine from L-ornithine and carbamoyl phosphate: step 3/3. This chain is Argininosuccinate lyase, found in Pyrobaculum calidifontis (strain DSM 21063 / JCM 11548 / VA1).